Reading from the N-terminus, the 398-residue chain is Probable aminomethyltransferase (398 aa).

It belongs to the GcvT family. As to quaternary structure, the glycine cleavage system is composed of four proteins: P, T, L and H.

It carries out the reaction N(6)-[(R)-S(8)-aminomethyldihydrolipoyl]-L-lysyl-[protein] + (6S)-5,6,7,8-tetrahydrofolate = N(6)-[(R)-dihydrolipoyl]-L-lysyl-[protein] + (6R)-5,10-methylene-5,6,7,8-tetrahydrofolate + NH4(+). The glycine cleavage system catalyzes the degradation of glycine. This is Probable aminomethyltransferase from Thermococcus kodakarensis (strain ATCC BAA-918 / JCM 12380 / KOD1) (Pyrococcus kodakaraensis (strain KOD1)).